The sequence spans 480 residues: Ribosome assembly protein rrb1 (480 aa).

Disordered regions lie at residues 1-78 (MSKR…WLPG) and 155-176 (QHDE…ILEH). Composition is skewed to acidic residues over residues 28-52 (VDTE…YIEA) and 158-172 (ENDD…EEDP). Phosphoserine is present on residues Ser-163 and Ser-166. 5 WD repeats span residues 183–225 (GACN…RSLD), 289–329 (SHTA…KTSA), 334–375 (AHPG…SSSS), 385–425 (WHRA…DEEE), and 446–480 (MGQQ…TITF).

In terms of assembly, associates with ribosomal protein L3.

It localises to the cytoplasm. It is found in the nucleus. The protein resides in the nucleolus. In terms of biological role, involved in regulation of L3 expression and stability and plays a role in early 60S ribosomal subunit assembly. May be required for proper assembly of pre-ribosomal particles during early ribosome biogenesis, presumably by targeting L3 onto the 35S precursor rRNA. In Schizosaccharomyces pombe (strain 972 / ATCC 24843) (Fission yeast), this protein is Ribosome assembly protein rrb1 (rrb1).